Here is a 442-residue protein sequence, read N- to C-terminus: Adenylosuccinate synthetase (442 aa).

Residues 16–22 (GDEGKGK) and 44–46 (GHT) contribute to the GTP site. Residue aspartate 17 is the Proton acceptor of the active site. Mg(2+) is bound by residues aspartate 17 and glycine 44. Residues 17-20 (DEGK), 42-45 (NAGH), threonine 133, arginine 147, glutamine 228, threonine 243, and arginine 307 each bind IMP. Catalysis depends on histidine 45, which acts as the Proton donor. 303 to 309 (AVTGRPR) contributes to the substrate binding site. GTP-binding positions include arginine 309, 335 to 337 (KLD), and 417 to 419 (STG).

This sequence belongs to the adenylosuccinate synthetase family. As to quaternary structure, homodimer. Requires Mg(2+) as cofactor.

It localises to the cytoplasm. The catalysed reaction is IMP + L-aspartate + GTP = N(6)-(1,2-dicarboxyethyl)-AMP + GDP + phosphate + 2 H(+). Its pathway is purine metabolism; AMP biosynthesis via de novo pathway; AMP from IMP: step 1/2. Its function is as follows. Plays an important role in the de novo pathway of purine nucleotide biosynthesis. Catalyzes the first committed step in the biosynthesis of AMP from IMP. In Koribacter versatilis (strain Ellin345), this protein is Adenylosuccinate synthetase.